A 259-amino-acid chain; its full sequence is Tryptophan synthase alpha chain (259 aa).

Catalysis depends on proton acceptor residues glutamate 42 and aspartate 53.

Belongs to the TrpA family. As to quaternary structure, tetramer of two alpha and two beta chains.

It carries out the reaction (1S,2R)-1-C-(indol-3-yl)glycerol 3-phosphate + L-serine = D-glyceraldehyde 3-phosphate + L-tryptophan + H2O. It participates in amino-acid biosynthesis; L-tryptophan biosynthesis; L-tryptophan from chorismate: step 5/5. Functionally, the alpha subunit is responsible for the aldol cleavage of indoleglycerol phosphate to indole and glyceraldehyde 3-phosphate. The sequence is that of Tryptophan synthase alpha chain from Erythrobacter litoralis (strain HTCC2594).